Reading from the N-terminus, the 486-residue chain is Galactose-1-phosphate uridylyltransferase (486 aa).

This sequence belongs to the galactose-1-phosphate uridylyltransferase type 2 family.

The protein localises to the cytoplasm. The catalysed reaction is alpha-D-galactose 1-phosphate + UDP-alpha-D-glucose = alpha-D-glucose 1-phosphate + UDP-alpha-D-galactose. The protein operates within carbohydrate metabolism; galactose metabolism. The polypeptide is Galactose-1-phosphate uridylyltransferase (Lacticaseibacillus paracasei (strain ATCC 334 / BCRC 17002 / CCUG 31169 / CIP 107868 / KCTC 3260 / NRRL B-441) (Lactobacillus paracasei)).